Reading from the N-terminus, the 475-residue chain is UDP-N-acetylmuramoylalanine--D-glutamate ligase (475 aa).

An ATP-binding site is contributed by 130-136 (GTNGKTT).

Belongs to the MurCDEF family.

It localises to the cytoplasm. It catalyses the reaction UDP-N-acetyl-alpha-D-muramoyl-L-alanine + D-glutamate + ATP = UDP-N-acetyl-alpha-D-muramoyl-L-alanyl-D-glutamate + ADP + phosphate + H(+). Its pathway is cell wall biogenesis; peptidoglycan biosynthesis. Cell wall formation. Catalyzes the addition of glutamate to the nucleotide precursor UDP-N-acetylmuramoyl-L-alanine (UMA). The protein is UDP-N-acetylmuramoylalanine--D-glutamate ligase of Corynebacterium diphtheriae (strain ATCC 700971 / NCTC 13129 / Biotype gravis).